Reading from the N-terminus, the 713-residue chain is Polyribonucleotide nucleotidyltransferase (713 aa).

2 residues coordinate Mg(2+): aspartate 485 and aspartate 491. The KH domain maps to 552 to 611 (PRIHTIKINPEKIKDVIGKGGSVIRALTEETGTNIELDDDGTVRISAVANEAAMEAIRRI). Positions 621–689 (NRIYEGKVVR…RQGRVRLSIK (69 aa)) constitute an S1 motif domain.

This sequence belongs to the polyribonucleotide nucleotidyltransferase family. Component of the RNA degradosome, which is a multiprotein complex involved in RNA processing and mRNA degradation. It depends on Mg(2+) as a cofactor.

It localises to the cytoplasm. The enzyme catalyses RNA(n+1) + phosphate = RNA(n) + a ribonucleoside 5'-diphosphate. In terms of biological role, involved in mRNA degradation. Catalyzes the phosphorolysis of single-stranded polyribonucleotides processively in the 3'- to 5'-direction. This is Polyribonucleotide nucleotidyltransferase from Aeromonas salmonicida (strain A449).